Reading from the N-terminus, the 359-residue chain is Ornithine cyclodeaminase (359 aa).

Residues arginine 53 and lysine 77 each coordinate L-ornithine. NAD(+)-binding positions include threonine 92, arginine 120, 147 to 148, aspartate 169, threonine 209, 232 to 235, lysine 239, and serine 300; these read AQ and VGGD. Arginine 120 serves as a coordination point for L-ornithine. Aspartate 235 is a binding site for L-ornithine. Residue aspartate 235 is the Proton donor/acceptor of the active site. Valine 301 contacts L-ornithine.

The protein belongs to the ornithine cyclodeaminase/mu-crystallin family. It depends on NAD(+) as a cofactor.

The enzyme catalyses L-ornithine = L-proline + NH4(+). Its pathway is amino-acid biosynthesis; L-proline biosynthesis; L-proline from L-ornithine: step 1/1. Functionally, catalyzes the conversion of L-ornithine into L-proline with release of ammonia. The sequence is that of Ornithine cyclodeaminase from Brucella melitensis biotype 1 (strain ATCC 23456 / CCUG 17765 / NCTC 10094 / 16M).